Consider the following 231-residue polypeptide: Ureidoacrylate amidohydrolase RutB (231 aa).

The active-site Proton acceptor is the D25. The active site involves K134. C167 functions as the Nucleophile in the catalytic mechanism.

The protein belongs to the isochorismatase family. RutB subfamily.

The catalysed reaction is (Z)-3-ureidoacrylate + H2O + H(+) = (Z)-3-aminoacrylate + NH4(+) + CO2. It catalyses the reaction (Z)-3-ureidoacrylate + H2O = (Z)-3-aminoacrylate + carbamate + H(+). It carries out the reaction (Z)-2-methylureidoacrylate + H2O + H(+) = (Z)-2-methylaminoacrylate + NH4(+) + CO2. In terms of biological role, hydrolyzes ureidoacrylate to form aminoacrylate and carbamate. The carbamate hydrolyzes spontaneously, thereby releasing one of the nitrogen atoms of the pyrimidine ring as ammonia and one of its carbon atoms as CO2. The chain is Ureidoacrylate amidohydrolase RutB from Escherichia coli O157:H7 (strain EC4115 / EHEC).